The chain runs to 417 residues: Probable tubulin polyglutamylase ttll-9 (417 aa).

The TTL domain maps to 23–372 (QRKKKILFKC…EKKLIGNENE (350 aa)). Residues 188 to 191 (QCYV), lysine 201, and aspartate 203 contribute to the ATP site.

It belongs to the tubulin--tyrosine ligase family. As to expression, expressed in head sensory neurons.

Functionally, polyglutamylase that forms polyglutamate side chains on tubulin. Acts when complexed with other proteins. Appears to be dispensable for polar spindle formation in dividing embryonic cells, for cilia-dependent osmotic avoidance and for male mating behavior. Probably by regulating microtubule stability via the glutamylation of tubulin, regulates PLM axon developmental growth. The polypeptide is Probable tubulin polyglutamylase ttll-9 (Caenorhabditis elegans).